A 520-amino-acid polypeptide reads, in one-letter code: Probable methylmalonate-semialdehyde/malonate-semialdehyde dehydrogenase [acylating], mitochondrial (520 aa).

Residues alanine 169, phenylalanine 171, lysine 195, glutamate 198, arginine 199, and serine 248 each contribute to the NAD(+) site. Cysteine 303 serves as the catalytic Nucleophile. Glutamate 403 serves as a coordination point for NAD(+).

It belongs to the aldehyde dehydrogenase family. In terms of assembly, homotetramer.

Its subcellular location is the mitochondrion. The enzyme catalyses 2-methyl-3-oxopropanoate + NAD(+) + CoA + H2O = propanoyl-CoA + hydrogencarbonate + NADH + H(+). It carries out the reaction 3-oxopropanoate + NAD(+) + CoA + H2O = hydrogencarbonate + acetyl-CoA + NADH + H(+). Functionally, probable malonate and methylmalonate semialdehyde dehydrogenase involved in the catabolism of valine, thymine, and compounds catabolized by way of beta-alanine, including uracil and cytidine. The sequence is that of Probable methylmalonate-semialdehyde/malonate-semialdehyde dehydrogenase [acylating], mitochondrial from Drosophila pseudoobscura pseudoobscura (Fruit fly).